The chain runs to 656 residues: Macrolide export ATP-binding/permease protein MacB (656 aa).

An ABC transporter domain is found at 20–258; sequence IELAGITRSF…EPDFAPHVDR (239 aa). 56–63 contributes to the ATP binding site; that stretch reads GASGSGKS. The next 4 helical transmembrane spans lie at 284-304, 531-551, 591-611, and 619-639; these read ALTL…LAIG, LTIL…IGVM, ALGG…IALF, and LLPV…FGYL.

Belongs to the ABC transporter superfamily. Macrolide exporter (TC 3.A.1.122) family. Homodimer.

It localises to the cell inner membrane. Functionally, non-canonical ABC transporter that contains transmembrane domains (TMD), which form a pore in the inner membrane, and an ATP-binding domain (NBD), which is responsible for energy generation. Confers resistance against macrolides. The polypeptide is Macrolide export ATP-binding/permease protein MacB (Azoarcus sp. (strain BH72)).